Here is a 245-residue protein sequence, read N- to C-terminus: Heat shock transcription factor (245 aa).

The DNA-binding element occupies 17–115 (KSGFVNRLYR…LISLITRDKS (99 aa)). The involved in trimerization stretch occupies residues 130–169 (SLQYLASCNYKQQKEINDLKDRIKTLETKYATLYEIISNA).

The protein belongs to the HSF family. Homotrimer. Homotrimerization increases the affinity of HSF1 to DNA.

The protein resides in the nucleus. Functionally, DNA-binding transcription factor that specifically binds heat shock promoter elements (HSE) and activates transcription. This Enterocytozoon bieneusi (strain H348) (Microsporidian parasite) protein is Heat shock transcription factor.